Here is an 853-residue protein sequence, read N- to C-terminus: Translation initiation factor IF-2 (853 aa).

Disordered regions lie at residues 1–68 (MSDT…ASDG) and 94–265 (LEQR…DKTS). Residues 20 to 32 (RKTSGTVKQSFSH) are compositionally biased toward polar residues. The span at 94–161 (LEQRKAEEAS…ASREAVERPS (68 aa)) shows a compositional bias: basic and acidic residues. Residues 163–176 (APRAAPAAQTPPAA) are compositionally biased toward low complexity. Basic and acidic residues-rich tracts occupy residues 196 to 219 (PARDDRADRAREVATKPSRGDAER) and 245 to 265 (RARERERERRVGGGDSNDKTS). The tr-type G domain occupies 347–515 (PRAPIVTIMG…AISIQAEILE (169 aa)). The G1 stretch occupies residues 356–363 (GHVDHGKT). 356–363 (GHVDHGKT) provides a ligand contact to GTP. Residues 381-385 (GITQH) form a G2 region. Positions 403 to 406 (DTPG) are G3. GTP-binding positions include 403–407 (DTPGH) and 457–460 (TKSD). Residues 457-460 (TKSD) are G4. The interval 493 to 495 (SAK) is G5.

It belongs to the TRAFAC class translation factor GTPase superfamily. Classic translation factor GTPase family. IF-2 subfamily.

It localises to the cytoplasm. In terms of biological role, one of the essential components for the initiation of protein synthesis. Protects formylmethionyl-tRNA from spontaneous hydrolysis and promotes its binding to the 30S ribosomal subunits. Also involved in the hydrolysis of GTP during the formation of the 70S ribosomal complex. The chain is Translation initiation factor IF-2 from Hyphomonas neptunium (strain ATCC 15444).